Here is a 326-residue protein sequence, read N- to C-terminus: Ig gamma-1 chain C region (326 aa).

Residues 1–97 (AETTAPSVYP…ASSTKVDKKI (97 aa)) form a CH1 region. Cysteine 27 and cysteine 82 are disulfide-bonded. The segment at 98-112 (VPRNCGGDCKPCICT) is hinge. A CH2 region spans residues 113-219 (GSEVSSVFIF…PIEKTISKPE (107 aa)). Disulfide bonds link cysteine 140/cysteine 200 and cysteine 246/cysteine 304. Residue asparagine 176 is glycosylated (N-linked (GlcNAc...) asparagine). The segment at 220-326 (GRTQVPHVYT…EKSLSHSPGK (107 aa)) is CH3.

This is Ig gamma-1 chain C region from Rattus norvegicus (Rat).